We begin with the raw amino-acid sequence, 519 residues long: uncharacterized protein (519 aa).

14 helical membrane passes run 37–57 (ISMSLFHEIVFVFIACTAQLM), 82–102 (GQLSWFPASYSLTVGTFILIA), 114–134 (MFVLGYIWFCIWSLISGFSYY), 146–166 (ALTGIAPAFLLPNALALLGRV), 175–195 (LIFALFGATAPNGFLLGSVFS), 209–229 (WTTAIVCIVFAIIGYFAIPHI), 240–260 (FDYLGAFFGVSGLVLINFSWN), 269–289 (VPYVYILLIIGFLSLVVFVLV), 309–329 (CVLICVAAGWACFGIWMYYLW), 337–357 (FATPLLVTAQLTPVGISGCAA), 373–393 (IMVVSMIAFTVGTILIATAPI), 402–422 (FVSIIVTPWGMDMSFPAATLM), 434–454 (IAASLVSTVVNYSISIGLGIA), and 475–495 (AWYMGTGFGGLGVCVAILTVF).

It belongs to the major facilitator superfamily.

It localises to the endoplasmic reticulum. It is found in the membrane. This is an uncharacterized protein from Schizosaccharomyces pombe (strain 972 / ATCC 24843) (Fission yeast).